Reading from the N-terminus, the 292-residue chain is MSHSSEQPLERVTIPALQQWKDKGRRVVMTTAYDAVAARIADPIVDIILVGDSVGNVCLGFDNTLPVSVAMMNHHLEAVARTRPHALLVADMPFLSFHVGSEDTIRNAGGFLQRGADAVKLEGGAKRIEMVRALVDCDIPVMGHLGLTPQSVNVMGGFKVQGRTTDTALRLLDDAHRLQEAGCFALVLEGIPAELAARATESLTIPTIGIGAGADCSGQVLVFHDVLGLTEGHRPKFVRAYTNGFQLFQEALSRWAADIRKGAFPGSEECYRLPDQLRHAVANWVPSSSTSR.

Residues Asp52 and Asp91 each coordinate Mg(2+). 3-methyl-2-oxobutanoate is bound by residues 52–53 (DS), Asp91, and Lys120. Glu122 provides a ligand contact to Mg(2+). The Proton acceptor role is filled by Glu189.

It belongs to the PanB family. As to quaternary structure, homodecamer; pentamer of dimers. Mg(2+) serves as cofactor.

Its subcellular location is the cytoplasm. The enzyme catalyses 3-methyl-2-oxobutanoate + (6R)-5,10-methylene-5,6,7,8-tetrahydrofolate + H2O = 2-dehydropantoate + (6S)-5,6,7,8-tetrahydrofolate. It participates in cofactor biosynthesis; (R)-pantothenate biosynthesis; (R)-pantoate from 3-methyl-2-oxobutanoate: step 1/2. Its function is as follows. Catalyzes the reversible reaction in which hydroxymethyl group from 5,10-methylenetetrahydrofolate is transferred onto alpha-ketoisovalerate to form ketopantoate. In Bradyrhizobium diazoefficiens (strain JCM 10833 / BCRC 13528 / IAM 13628 / NBRC 14792 / USDA 110), this protein is 3-methyl-2-oxobutanoate hydroxymethyltransferase 2.